A 211-amino-acid polypeptide reads, in one-letter code: Probable GTP-binding protein EngB (211 aa).

In terms of domain architecture, EngB-type G spans proline 22 to proline 195. GTP contacts are provided by residues glycine 30–serine 37, glycine 57–threonine 61, aspartate 75–glycine 78, threonine 142–aspartate 145, and phenylalanine 174–serine 176. Mg(2+) is bound by residues serine 37 and threonine 59.

This sequence belongs to the TRAFAC class TrmE-Era-EngA-EngB-Septin-like GTPase superfamily. EngB GTPase family. Requires Mg(2+) as cofactor.

Functionally, necessary for normal cell division and for the maintenance of normal septation. This Lachnospira eligens (strain ATCC 27750 / DSM 3376 / VPI C15-48 / C15-B4) (Eubacterium eligens) protein is Probable GTP-binding protein EngB.